Reading from the N-terminus, the 270-residue chain is Putative phosphoenolpyruvate synthase regulatory protein (270 aa).

150-157 (GVSRCGKT) lines the ADP pocket.

The protein belongs to the pyruvate, phosphate/water dikinase regulatory protein family. PSRP subfamily.

It carries out the reaction [pyruvate, water dikinase] + ADP = [pyruvate, water dikinase]-phosphate + AMP + H(+). It catalyses the reaction [pyruvate, water dikinase]-phosphate + phosphate + H(+) = [pyruvate, water dikinase] + diphosphate. Functionally, bifunctional serine/threonine kinase and phosphorylase involved in the regulation of the phosphoenolpyruvate synthase (PEPS) by catalyzing its phosphorylation/dephosphorylation. This is Putative phosphoenolpyruvate synthase regulatory protein from Shewanella loihica (strain ATCC BAA-1088 / PV-4).